The primary structure comprises 61 residues: Small ribosomal subunit protein uS14 (61 aa).

Cysteine 24, cysteine 27, cysteine 40, and cysteine 43 together coordinate Zn(2+).

The protein belongs to the universal ribosomal protein uS14 family. Zinc-binding uS14 subfamily. As to quaternary structure, part of the 30S ribosomal subunit. Contacts proteins S3 and S10. Requires Zn(2+) as cofactor.

Functionally, binds 16S rRNA, required for the assembly of 30S particles and may also be responsible for determining the conformation of the 16S rRNA at the A site. This is Small ribosomal subunit protein uS14 from Alkaliphilus oremlandii (strain OhILAs) (Clostridium oremlandii (strain OhILAs)).